The chain runs to 242 residues: NH(3)-dependent NAD(+) synthetase (242 aa).

Glycine 27–serine 34 contributes to the ATP binding site. Aspartate 33 contributes to the Mg(2+) binding site. Arginine 109 provides a ligand contact to deamido-NAD(+). Threonine 129 lines the ATP pocket. Glutamate 134 provides a ligand contact to Mg(2+). 2 residues coordinate deamido-NAD(+): lysine 142 and aspartate 149. ATP-binding residues include lysine 158 and threonine 180. Residue histidine 231–lysine 232 coordinates deamido-NAD(+).

It belongs to the NAD synthetase family. In terms of assembly, homodimer.

It catalyses the reaction deamido-NAD(+) + NH4(+) + ATP = AMP + diphosphate + NAD(+) + H(+). The protein operates within cofactor biosynthesis; NAD(+) biosynthesis; NAD(+) from deamido-NAD(+) (ammonia route): step 1/1. Catalyzes the ATP-dependent amidation of deamido-NAD to form NAD. Uses ammonia as a nitrogen source. The chain is NH(3)-dependent NAD(+) synthetase from Thermoplasma volcanium (strain ATCC 51530 / DSM 4299 / JCM 9571 / NBRC 15438 / GSS1).